The sequence spans 317 residues: Lipopolysaccharide heptosyltransferase 1 (317 aa).

Residues threonine 187, threonine 188, lysine 192, glutamate 222, methionine 242, aspartate 261, threonine 262, glycine 263, and histidine 266 each contribute to the ADP-L-glycero-beta-D-manno-heptose site.

It belongs to the glycosyltransferase 9 family.

The protein resides in the cell inner membrane. It carries out the reaction an alpha-Kdo-(2-&gt;4)-alpha-Kdo-(2-&gt;6)-lipid A + ADP-L-glycero-beta-D-manno-heptose = an L-alpha-D-Hep-(1-&gt;5)-[alpha-Kdo-(2-&gt;4)]-alpha-Kdo-(2-&gt;6)-lipid A + ADP + H(+). The protein operates within bacterial outer membrane biogenesis; LPS core biosynthesis. In terms of biological role, glycosyltransferase involved in the biosynthesis of the core oligosaccharide region of lipopolysaccharide (LPS). Catalyzes the addition of the first heptose unit to one 3-deoxy-D-manno-octulosonic acid (Kdo) residue of the Kdo2-lipid A module. This chain is Lipopolysaccharide heptosyltransferase 1, found in Salmonella typhimurium (strain LT2 / SGSC1412 / ATCC 700720).